The primary structure comprises 100 residues: Small ribosomal subunit protein uS14m (100 aa).

The protein belongs to the universal ribosomal protein uS14 family.

The protein resides in the mitochondrion. The polypeptide is Small ribosomal subunit protein uS14m (RPS14) (Brassica napus (Rape)).